Consider the following 901-residue polypeptide: Probable inorganic carbon transporter subunit DabA (901 aa).

Zn(2+) is bound by residues C424, D426, H606, and C621.

This sequence belongs to the inorganic carbon transporter (TC 9.A.2) DabA family. In terms of assembly, forms a complex with DabB. It depends on Zn(2+) as a cofactor.

The protein resides in the cell membrane. In terms of biological role, part of an energy-coupled inorganic carbon pump. The polypeptide is Probable inorganic carbon transporter subunit DabA (Staphylococcus aureus (strain Mu3 / ATCC 700698)).